A 185-amino-acid polypeptide reads, in one-letter code: Photosystem I assembly protein Ycf4 (185 aa).

A run of 2 helical transmembrane segments spans residues 20 to 40 and 57 to 77; these read GNFF…AVGA and ILFF…LFIS.

It belongs to the Ycf4 family.

Its subcellular location is the plastid. It localises to the chloroplast thylakoid membrane. Seems to be required for the assembly of the photosystem I complex. The chain is Photosystem I assembly protein Ycf4 from Sorghum bicolor (Sorghum).